The sequence spans 413 residues: Alpha-1-antitrypsin 1-2 (413 aa).

A signal peptide spans M1–A24. 3 N-linked (GlcNAc...) asparagine glycosylation sites follow: N64, N101, and N265. The RCL stretch occupies residues A368–H387.

It belongs to the serpin family.

The protein resides in the secreted. Its function is as follows. Inhibitor of serine proteases. Its primary target is elastase, but it also has a moderate affinity for plasmin and thrombin. This is Alpha-1-antitrypsin 1-2 (Serpina1b) from Mus musculus (Mouse).